We begin with the raw amino-acid sequence, 213 residues long: MYQDKILVRQLGLQPYEPVSQAMHEFTDTRDENTPDEIWLVEHFPVFTQGQAGKAEHVLMPGDIPVIQSDRGGQVTYHGPGQQVMYVLLNLKRRKLGVRELVTLLEQTVVNTLAERGIDAHPRADAPGVYVGEKKICSLGLRIRRGCSFHGLALNVNMDLSPFLRINPCGYAGMEMAKISQWDNNATTDNIAPRLLANILALLNNPPHEYIPA.

The BPL/LPL catalytic domain occupies 32–207; sequence ENTPDEIWLV…NILALLNNPP (176 aa). Residues 71–78, 138–140, and 151–153 contribute to the substrate site; these read RGGQVTYH, SLG, and GLA. The Acyl-thioester intermediate role is filled by Cys169.

This sequence belongs to the LipB family.

The protein resides in the cytoplasm. It carries out the reaction octanoyl-[ACP] + L-lysyl-[protein] = N(6)-octanoyl-L-lysyl-[protein] + holo-[ACP] + H(+). The protein operates within protein modification; protein lipoylation via endogenous pathway; protein N(6)-(lipoyl)lysine from octanoyl-[acyl-carrier-protein]: step 1/2. In terms of biological role, catalyzes the transfer of endogenously produced octanoic acid from octanoyl-acyl-carrier-protein onto the lipoyl domains of lipoate-dependent enzymes. Lipoyl-ACP can also act as a substrate although octanoyl-ACP is likely to be the physiological substrate. This chain is Octanoyltransferase, found in Citrobacter koseri (strain ATCC BAA-895 / CDC 4225-83 / SGSC4696).